Here is a 454-residue protein sequence, read N- to C-terminus: Bifunctional protein GlmU (454 aa).

The pyrophosphorylase stretch occupies residues 1-226; sequence MALNVVILAA…AIEVEGANNR (226 aa). Residues 8 to 11, lysine 22, glutamine 73, 78 to 79, 100 to 102, glycine 137, glutamate 151, asparagine 166, and asparagine 224 contribute to the UDP-N-acetyl-alpha-D-glucosamine site; these read LAAG, GT, and YGD. Residue aspartate 102 participates in Mg(2+) binding. Asparagine 224 contributes to the Mg(2+) binding site. Residues 227 to 247 are linker; that stretch reads VQLAQLERAYQAREAEKLMIA. Residues 248 to 454 are N-acetyltransferase; that stretch reads GANLRDPSRI…GWQRPVKIKK (207 aa). Residues arginine 330 and lysine 348 each contribute to the UDP-N-acetyl-alpha-D-glucosamine site. The active-site Proton acceptor is histidine 360. Positions 363 and 374 each coordinate UDP-N-acetyl-alpha-D-glucosamine. Acetyl-CoA contacts are provided by residues alanine 377, 383–384, serine 402, alanine 420, and arginine 437; that span reads NY.

This sequence in the N-terminal section; belongs to the N-acetylglucosamine-1-phosphate uridyltransferase family. It in the C-terminal section; belongs to the transferase hexapeptide repeat family. Homotrimer. Mg(2+) serves as cofactor.

It is found in the cytoplasm. The catalysed reaction is alpha-D-glucosamine 1-phosphate + acetyl-CoA = N-acetyl-alpha-D-glucosamine 1-phosphate + CoA + H(+). The enzyme catalyses N-acetyl-alpha-D-glucosamine 1-phosphate + UTP + H(+) = UDP-N-acetyl-alpha-D-glucosamine + diphosphate. It functions in the pathway nucleotide-sugar biosynthesis; UDP-N-acetyl-alpha-D-glucosamine biosynthesis; N-acetyl-alpha-D-glucosamine 1-phosphate from alpha-D-glucosamine 6-phosphate (route II): step 2/2. It participates in nucleotide-sugar biosynthesis; UDP-N-acetyl-alpha-D-glucosamine biosynthesis; UDP-N-acetyl-alpha-D-glucosamine from N-acetyl-alpha-D-glucosamine 1-phosphate: step 1/1. Its pathway is bacterial outer membrane biogenesis; LPS lipid A biosynthesis. In terms of biological role, catalyzes the last two sequential reactions in the de novo biosynthetic pathway for UDP-N-acetylglucosamine (UDP-GlcNAc). The C-terminal domain catalyzes the transfer of acetyl group from acetyl coenzyme A to glucosamine-1-phosphate (GlcN-1-P) to produce N-acetylglucosamine-1-phosphate (GlcNAc-1-P), which is converted into UDP-GlcNAc by the transfer of uridine 5-monophosphate (from uridine 5-triphosphate), a reaction catalyzed by the N-terminal domain. The chain is Bifunctional protein GlmU from Shewanella oneidensis (strain ATCC 700550 / JCM 31522 / CIP 106686 / LMG 19005 / NCIMB 14063 / MR-1).